We begin with the raw amino-acid sequence, 314 residues long: Nodulation protein D 2 (314 aa).

Positions 6–63 (LDLNLLVVLDALMTERNLTAAARSINLSQPAMSAAVARLRTNFRDDLFAMAGREFIPT) constitute an HTH lysR-type domain. Positions 23-42 (LTAAARSINLSQPAMSAAVA) form a DNA-binding region, H-T-H motif.

The protein belongs to the LysR transcriptional regulatory family.

NodD regulates the expression of the nodABCFE genes which encode other nodulation proteins. NodD is also a negative regulator of its own expression. Binds flavonoids as inducers. This Rhizobium tropici protein is Nodulation protein D 2 (nodD2).